The primary structure comprises 390 residues: Multidrug resistance protein MdtL (390 aa).

12 helical membrane passes run 4–24 (FLIC…MYLV), 42–62 (IAFS…GKVA), 69–89 (PVAI…SRAT), 93–113 (LFLT…VVAF), 131–151 (LLNG…HLIM), 158–178 (SLFY…VFIL), 199–221 (LLNR…ILTF), 245–265 (ALTA…LSVF), 269–289 (TLML…SLSS), 293–313 (VTLF…GVAM), 316–336 (ALGP…IAQV), and 353–375 (ALNM…LMTI).

The protein belongs to the major facilitator superfamily. DHA1 family. MdtL (TC 2.A.1.2.22) subfamily.

Its subcellular location is the cell inner membrane. The polypeptide is Multidrug resistance protein MdtL (Citrobacter koseri (strain ATCC BAA-895 / CDC 4225-83 / SGSC4696)).